The following is a 439-amino-acid chain: Microfibrillar-associated protein 1 (439 aa).

Disordered regions lie at residues 1–27 (MSVP…NEKG) and 39–200 (YVSG…PRLK). Serine 2 is modified (N-acetylserine). A phosphoserine mark is found at serine 52 and serine 53. Residues 61-70 (QFIKKAKEQE) are compositionally biased toward basic and acidic residues. Residue lysine 67 forms a Glycyl lysine isopeptide (Lys-Gly) (interchain with G-Cter in SUMO2) linkage. The segment covering 71–81 (AEPEEQEEDSS) has biased composition (acidic residues). 5 positions are modified to phosphoserine: serine 94, serine 116, serine 118, serine 132, and serine 133. 2 stretches are compositionally biased toward acidic residues: residues 112–122 (VVGESDSEVEG) and 131–144 (DSSE…DDEE). Over residues 145–163 (IERRRGMMRQRAQERKNEE) the composition is skewed to basic and acidic residues. A compositionally biased stretch (acidic residues) spans 178–195 (ESESESEYEEYTDSEDEM). Lysine 249 is covalently cross-linked (Glycyl lysine isopeptide (Lys-Gly) (interchain with G-Cter in SUMO2)). Phosphothreonine is present on threonine 267. Lysine 357 participates in a covalent cross-link: Glycyl lysine isopeptide (Lys-Gly) (interchain with G-Cter in SUMO2). The residue at position 361 (serine 361) is a Phosphoserine. Residues lysine 371, lysine 381, lysine 415, and lysine 418 each participate in a glycyl lysine isopeptide (Lys-Gly) (interchain with G-Cter in SUMO2) cross-link. The residue at position 432 (serine 432) is a Phosphoserine.

It belongs to the MFAP1 family. Component of the spliceosome B complex. Interacts with PRPF38A (via N-terminal interaction domain).

It localises to the nucleus. Functionally, involved in pre-mRNA splicing as a component of the spliceosome. This is Microfibrillar-associated protein 1 from Homo sapiens (Human).